The primary structure comprises 424 residues: Tubulin-specific chaperone cofactor E-like protein (424 aa).

2 positions are modified to phosphoserine: S18 and S41. 7 LRR repeats span residues 73–98 (CAHV…IVSN), 99–123 (VPQL…TCAG), 124–147 (SFSG…HTIL), 150–172 (LPDL…PSVC), 173–197 (CHSL…KLGV), 199–224 (FPSL…SLAR), and 226–250 (FPNL…KLNS). The LRRCT domain maps to 262–303 (IPLLQPYTTEERRKLVVARLPSVSKLNGSVVTDGEREDSERF). Residues 334–424 (AEVDLRPQSS…DKIFVESKTK (91 aa)) enclose the Ubiquitin-like domain. The stretch at 350–375 (FNDQVEEVSIRLDQTVAELKRQLKTL) forms a coiled coil.

It localises to the cytoplasm. The protein resides in the cytoskeleton. Functionally, acts as a regulator of tubulin stability. The sequence is that of Tubulin-specific chaperone cofactor E-like protein (Tbcel) from Rattus norvegicus (Rat).